Reading from the N-terminus, the 221-residue chain is MTKTADLKGSNFTLSVLHLPNDDITQALSMLEQKVAQAPSFFASAPVVINIENVSNEINFVDLKLGVERTGMIPVGITGCKDKEKQAQATSAGFAVMTSFTPQQVTQKANMQPTKVVRTPIRSGQQVYAKDADLVILNHVSPGAEVIADGSIHIHGTLRGRAIAGASGQKEAKIFCKNLQAELISIAGNYWLSDQINKEYWHQNVMVTMVEDHIKIDTLTL.

Belongs to the MinC family. Interacts with MinD and FtsZ.

Cell division inhibitor that blocks the formation of polar Z ring septums. Rapidly oscillates between the poles of the cell to destabilize FtsZ filaments that have formed before they mature into polar Z rings. Prevents FtsZ polymerization. This Aliivibrio salmonicida (strain LFI1238) (Vibrio salmonicida (strain LFI1238)) protein is Probable septum site-determining protein MinC.